We begin with the raw amino-acid sequence, 532 residues long: O-phosphoserine--tRNA(Cys) ligase (532 aa).

Substrate contacts are provided by residues 186 to 188 (HMT), 231 to 233 (SAS), 273 to 274 (YY), and Asn317.

The protein belongs to the class-II aminoacyl-tRNA synthetase family. O-phosphoseryl-tRNA(Cys) synthetase subfamily. As to quaternary structure, homotetramer. Interacts with SepCysS.

The enzyme catalyses tRNA(Cys) + O-phospho-L-serine + ATP = O-phospho-L-seryl-tRNA(Cys) + AMP + diphosphate. Catalyzes the attachment of O-phosphoserine (Sep) to tRNA(Cys). The protein is O-phosphoserine--tRNA(Cys) ligase of Methanothermobacter thermautotrophicus (strain ATCC 29096 / DSM 1053 / JCM 10044 / NBRC 100330 / Delta H) (Methanobacterium thermoautotrophicum).